Reading from the N-terminus, the 413-residue chain is Serine hydroxymethyltransferase (413 aa).

(6S)-5,6,7,8-tetrahydrofolate-binding positions include L117 and 121 to 123 (GHL). K226 is subject to N6-(pyridoxal phosphate)lysine. 349–351 (SPF) contacts (6S)-5,6,7,8-tetrahydrofolate.

The protein belongs to the SHMT family. As to quaternary structure, homodimer. The cofactor is pyridoxal 5'-phosphate.

The protein localises to the cytoplasm. The catalysed reaction is (6R)-5,10-methylene-5,6,7,8-tetrahydrofolate + glycine + H2O = (6S)-5,6,7,8-tetrahydrofolate + L-serine. It functions in the pathway one-carbon metabolism; tetrahydrofolate interconversion. It participates in amino-acid biosynthesis; glycine biosynthesis; glycine from L-serine: step 1/1. Its function is as follows. Catalyzes the reversible interconversion of serine and glycine with tetrahydrofolate (THF) serving as the one-carbon carrier. This reaction serves as the major source of one-carbon groups required for the biosynthesis of purines, thymidylate, methionine, and other important biomolecules. Also exhibits THF-independent aldolase activity toward beta-hydroxyamino acids, producing glycine and aldehydes, via a retro-aldol mechanism. This chain is Serine hydroxymethyltransferase, found in Pelobacter propionicus (strain DSM 2379 / NBRC 103807 / OttBd1).